We begin with the raw amino-acid sequence, 353 residues long: Peroxidase C1A (353 aa).

A signal peptide spans 1-30; that stretch reads MHFSSSSTLFTCITLIPLVCLILHASLSDA. Glutamine 31 is modified (pyrrolidone carboxylic acid). Disulfide bonds link cysteine 41–cysteine 121, cysteine 74–cysteine 79, cysteine 127–cysteine 331, and cysteine 207–cysteine 239. Asparagine 43 carries N-linked (GlcNAc...) asparagine glycosylation. The active-site Proton acceptor is histidine 72. Positions 73, 76, 78, 80, and 82 each coordinate Ca(2+). Asparagine 87 carries N-linked (GlcNAc...) asparagine glycosylation. Glutamate 94 contributes to the Ca(2+) binding site. Proline 169 contributes to the substrate binding site. Asparagine 188 carries N-linked (GlcNAc...) asparagine glycosylation. Heme b is bound at residue histidine 200. Threonine 201 is a Ca(2+) binding site. N-linked (GlcNAc...) asparagine glycosylation is found at asparagine 216, asparagine 228, and asparagine 244. The Ca(2+) site is built by aspartate 252, threonine 255, and aspartate 260. 2 N-linked (GlcNAc...) asparagine glycosylation sites follow: asparagine 285 and asparagine 298. Positions 339-353 are excised as a propeptide; that stretch reads LLHDMVEVVDFVSSM.

Belongs to the peroxidase family. Classical plant (class III) peroxidase subfamily. Monomer. Requires Ca(2+) as cofactor. It depends on heme b as a cofactor.

It localises to the secreted. The protein resides in the vacuole. It carries out the reaction 2 a phenolic donor + H2O2 = 2 a phenolic radical donor + 2 H2O. Functionally, removal of H(2)O(2), oxidation of toxic reductants, biosynthesis and degradation of lignin, suberization, auxin catabolism, response to environmental stresses such as wounding, pathogen attack and oxidative stress. These functions might be dependent on each isozyme/isoform in each plant tissue. This chain is Peroxidase C1A (PRXC1A), found in Armoracia rusticana (Horseradish).